We begin with the raw amino-acid sequence, 709 residues long: Bud site selection protein 14 (709 aa).

S2 carries the N-acetylserine modification. Positions 61–258 (DIINNRPTSG…DYQPLSPPRE (198 aa)) are disordered. Composition is skewed to polar residues over residues 62–74 (IINNRPTSGSKLT) and 89–107 (VTPTSNKSSPFNSKLNILS). Composition is skewed to basic and acidic residues over residues 111–123 (EKGHDVLRNRDDD) and 131–150 (VEKHMHSNSKRDQRHYKENS). Phosphotyrosine is present on Y159. S160 and S162 each carry phosphoserine. Phosphothreonine is present on T177. S212 and S222 each carry phosphoserine. The span at 212–226 (SEDEDEEENYSDDDD) shows a compositional bias: acidic residues. Residues 259–320 (LDPDKLYALY…PAEILETFPE (62 aa)) form the SH3 domain. Positions 334-367 (SSQSVASSDSKDDSISSGNKNQSDAESIIPTPAL) are disordered. Phosphoserine is present on residues S376, S378, and S401. Residues 396–406 (DTSLDSNDDGG) are compositionally biased toward acidic residues. Disordered stretches follow at residues 396–421 (DTSLDSNDDGGEGNGQSYDDDVDNDK), 464–510 (NVKK…SDYD), 525–571 (ANGM…SSRA), and 600–680 (ASLG…PASK). Residues 470 to 504 (RQDNKNESEPKTSSSKDREDDYNANRYVGQEKSEP) are compositionally biased toward basic and acidic residues. A Phosphoserine modification is found at S507. Residues 531 to 552 (SDSQNSLSTIGEFSPSSSEWTN) are compositionally biased toward polar residues. Positions 553–569 (ESPSTPIVEESSSIPSS) are enriched in low complexity. Polar residues predominate over residues 600–614 (ASLGSSGGMANQTDA). Basic and acidic residues predominate over residues 615–633 (EQPKEELEKHHSTPEEEKQ). Phosphoserine occurs at positions 655, 658, and 670. Over residues 655–671 (SSASINSSLSGSRALSN) the composition is skewed to low complexity.

As to quaternary structure, interacts with GLC7.

Its function is as follows. Important for bud site selection. Seems to be a regulatory subunit of the BUD14-GLC7 type-I phosphatase complex. The BUD14-GLC7 complex is necessary to regulate microtubule dynamics at the cortex and may function as a specific activator of the dynein complex. This Saccharomyces cerevisiae (strain ATCC 204508 / S288c) (Baker's yeast) protein is Bud site selection protein 14 (BUD14).